We begin with the raw amino-acid sequence, 160 residues long: Cytochrome b6-f complex subunit 4 (160 aa).

The next 3 helical transmembrane spans lie at 36-56, 95-115, and 131-151; these read LLYV…GLAV, LLGV…PFIE, and LVFI…CLPI.

This sequence belongs to the cytochrome b family. PetD subfamily. As to quaternary structure, the 4 large subunits of the cytochrome b6-f complex are cytochrome b6, subunit IV (17 kDa polypeptide, petD), cytochrome f and the Rieske protein, while the 4 small subunits are petG, petL, petM and petN. The complex functions as a dimer.

Its subcellular location is the plastid. The protein resides in the chloroplast thylakoid membrane. Functionally, component of the cytochrome b6-f complex, which mediates electron transfer between photosystem II (PSII) and photosystem I (PSI), cyclic electron flow around PSI, and state transitions. This chain is Cytochrome b6-f complex subunit 4, found in Trieres chinensis (Marine centric diatom).